The sequence spans 321 residues: MNDKDHFSSPAHITVLLNEAVAGLALKEKGIYIDGTFGRGGHSRLILSRLADNGRLIAIDRDPRAIAEAKTIQDPRFHIEHRSFSDIPRICERLNLVGKVDGILLDLGVSSPQLDEAERGFSFMKDGPLDMRMDTTQGLSASEWLQQVSEQDLAWVLKTFGEERFAKRIAQAIVNYNKQALQHGTEPLSRTLQLAELIANAVPFKDKHKHPATRSFQAIRIFINAELDELESVLKSAVQVLAPQGRLAIISFHSLEDRMVKHFMRKQSKGEDIPKGLPLRDDQIQRTQTLKVIGKAIMPTEQEQQQNPRSRSAVLRVAEKL.

S-adenosyl-L-methionine is bound by residues 40-42 (GGH), aspartate 60, phenylalanine 84, aspartate 106, and glutamine 113.

The protein belongs to the methyltransferase superfamily. RsmH family.

It localises to the cytoplasm. It carries out the reaction cytidine(1402) in 16S rRNA + S-adenosyl-L-methionine = N(4)-methylcytidine(1402) in 16S rRNA + S-adenosyl-L-homocysteine + H(+). Functionally, specifically methylates the N4 position of cytidine in position 1402 (C1402) of 16S rRNA. The sequence is that of Ribosomal RNA small subunit methyltransferase H from Pasteurella multocida (strain Pm70).